A 522-amino-acid chain; its full sequence is Putative malate dehydrogenase 1B (522 aa).

The interval 495–522 (EETEKSSSEDTPEAAAAAVSTGDETVPS) is disordered.

It belongs to the LDH/MDH superfamily. MDH type 2 family.

The chain is Putative malate dehydrogenase 1B (MDH1B) from Branchiostoma floridae (Florida lancelet).